We begin with the raw amino-acid sequence, 190 residues long: Large ribosomal subunit protein uL5 (190 aa).

The protein belongs to the universal ribosomal protein uL5 family. In terms of assembly, part of the 50S ribosomal subunit; contacts the 5S rRNA and probably tRNA. Forms a bridge to the 30S subunit in the 70S ribosome.

This is one of the proteins that bind and probably mediate the attachment of the 5S RNA into the large ribosomal subunit, where it forms part of the central protuberance. In the 70S ribosome it contacts protein S13 of the 30S subunit (bridge B1b), connecting the 2 subunits; this bridge is implicated in subunit movement. May contact the P site tRNA; the 5S rRNA and some of its associated proteins might help stabilize positioning of ribosome-bound tRNAs. The chain is Large ribosomal subunit protein uL5 from Methanocaldococcus jannaschii (strain ATCC 43067 / DSM 2661 / JAL-1 / JCM 10045 / NBRC 100440) (Methanococcus jannaschii).